The chain runs to 385 residues: Aldehyde dehydrogenase family 3 member B2 (385 aa).

An NAD(+)-binding site is contributed by 107-112; that stretch reads GSPRVG. Active-site residues include E129 and C163. Position 382 is a cysteine methyl ester (C382). A lipid anchor (S-geranylgeranyl cysteine) is attached at C382. The propeptide at 383–385 is removed in mature form; it reads TLL.

This sequence belongs to the aldehyde dehydrogenase family. In terms of processing, geranylgeranylation is important for localization to lipid droplets and enzyme activity. As to expression, salivary gland. Expressed at protein level in placenta.

It is found in the lipid droplet. The enzyme catalyses an aldehyde + NAD(+) + H2O = a carboxylate + NADH + 2 H(+). The catalysed reaction is a long-chain fatty aldehyde + NAD(+) + H2O = a long-chain fatty acid + NADH + 2 H(+). It carries out the reaction a medium-chain fatty aldehyde + NAD(+) + H2O = a medium-chain fatty acid + NADH + 2 H(+). It catalyses the reaction hexadecanoate + NADH + 2 H(+) = hexadecanal + NAD(+) + H2O. The enzyme catalyses octanal + NAD(+) + H2O = octanoate + NADH + 2 H(+). The protein operates within alcohol metabolism; ethanol degradation; acetate from ethanol: step 2/2. Functionally, oxidizes medium and long chain fatty aldehydes in lipid droplets into non-toxic fatty acids. This Homo sapiens (Human) protein is Aldehyde dehydrogenase family 3 member B2 (ALDH3B2).